The following is a 455-amino-acid chain: ATP-dependent protease ATPase subunit HslU (455 aa).

ATP contacts are provided by residues Ile19 and 61-66; that span reads GVGKTE. A disordered region spans residues 144–163; it reads ESKVGFANEPAEDAASKKEK. Residues Asp268, Glu333, and Arg405 each coordinate ATP.

This sequence belongs to the ClpX chaperone family. HslU subfamily. In terms of assembly, a double ring-shaped homohexamer of HslV is capped on each side by a ring-shaped HslU homohexamer. The assembly of the HslU/HslV complex is dependent on binding of ATP.

It localises to the cytoplasm. In terms of biological role, ATPase subunit of a proteasome-like degradation complex; this subunit has chaperone activity. The binding of ATP and its subsequent hydrolysis by HslU are essential for unfolding of protein substrates subsequently hydrolyzed by HslV. HslU recognizes the N-terminal part of its protein substrates and unfolds these before they are guided to HslV for hydrolysis. The polypeptide is ATP-dependent protease ATPase subunit HslU (Francisella tularensis subsp. novicida (strain U112)).